Consider the following 109-residue polypeptide: Elongation factor G, chloroplastic (109 aa).

It belongs to the GTP-binding elongation factor family. EF-G/EF-2 subfamily.

It is found in the plastid. The protein localises to the chloroplast. Its pathway is protein biosynthesis; polypeptide chain elongation. Functionally, chloroplast-localized elongation factor EF-G involved in protein synthesis in plastids. Catalyzes the GTP-dependent ribosomal translocation step during translation elongation. During this step, the ribosome changes from the pre-translocational (PRE) to the post-translocational (POST) state as the newly formed A-site-bound peptidyl-tRNA and P-site-bound deacylated tRNA move to the P and E sites, respectively. Catalyzes the coordinated movement of the two tRNA molecules, the mRNA and conformational changes in the ribosome. The polypeptide is Elongation factor G, chloroplastic (Arachis hypogaea (Peanut)).